Consider the following 282-residue polypeptide: Nucleotide-binding protein ABO_0549 (282 aa).

8–15 serves as a coordination point for ATP; the sequence is GRSGSGKT. 59–62 is a GTP binding site; it reads DARN.

It belongs to the RapZ-like family.

Displays ATPase and GTPase activities. The sequence is that of Nucleotide-binding protein ABO_0549 from Alcanivorax borkumensis (strain ATCC 700651 / DSM 11573 / NCIMB 13689 / SK2).